Reading from the N-terminus, the 217-residue chain is ATP-dependent Clp protease proteolytic subunit 2 (217 aa).

Ser121 acts as the Nucleophile in catalysis. Residue His146 is part of the active site.

It belongs to the peptidase S14 family. In terms of assembly, fourteen ClpP subunits assemble into 2 heptameric rings which stack back to back to give a disk-like structure with a central cavity, resembling the structure of eukaryotic proteasomes.

The protein resides in the cytoplasm. It catalyses the reaction Hydrolysis of proteins to small peptides in the presence of ATP and magnesium. alpha-casein is the usual test substrate. In the absence of ATP, only oligopeptides shorter than five residues are hydrolyzed (such as succinyl-Leu-Tyr-|-NHMec, and Leu-Tyr-Leu-|-Tyr-Trp, in which cleavage of the -Tyr-|-Leu- and -Tyr-|-Trp bonds also occurs).. Functionally, cleaves peptides in various proteins in a process that requires ATP hydrolysis. Has a chymotrypsin-like activity. Plays a major role in the degradation of misfolded proteins. The chain is ATP-dependent Clp protease proteolytic subunit 2 from Paraburkholderia xenovorans (strain LB400).